Reading from the N-terminus, the 108-residue chain is MLIVTTNEIPGYRIDEILGSVWGLTVRSRNIVSQFGAGLKSIFGGELRGMTTVLIDSRNQAMQRLVEEATARGANAILAMRFDTSEIGGMWTEICAYGTAARVSRLNS.

It belongs to the UPF0145 family.

The chain is UPF0145 protein Acel_2109 from Acidothermus cellulolyticus (strain ATCC 43068 / DSM 8971 / 11B).